The sequence spans 95 residues: Large ribosomal subunit protein uL23 (95 aa).

It belongs to the universal ribosomal protein uL23 family. In terms of assembly, part of the 50S ribosomal subunit. Contacts protein L29, and trigger factor when it is bound to the ribosome.

In terms of biological role, one of the early assembly proteins it binds 23S rRNA. One of the proteins that surrounds the polypeptide exit tunnel on the outside of the ribosome. Forms the main docking site for trigger factor binding to the ribosome. This chain is Large ribosomal subunit protein uL23, found in Solibacter usitatus (strain Ellin6076).